The sequence spans 400 residues: ATP-dependent rRNA helicase RRP3 (400 aa).

Residues 1–29 (MEFGDLRIDESLIKTCQEKGITRPTEVQR) carry the Q motif motif. A Helicase ATP-binding domain is found at 32 to 202 (IPAVLGGGDV…SSILKRPKTI (171 aa)). 45 to 52 (SQTGSGKT) is a binding site for ATP. The short motif at 150–153 (DEAD) is the DEAD box element. The region spanning 229-373 (ALVELLEMSQ…EFKMMKKNFG (145 aa)) is the Helicase C-terminal domain.

The protein belongs to the DEAD box helicase family. DDX47/RRP3 subfamily. In terms of assembly, interacts with the SSU processome.

Its subcellular location is the nucleus. It carries out the reaction ATP + H2O = ADP + phosphate + H(+). In terms of biological role, ATP-dependent rRNA helicase required for pre-ribosomal RNA processing. Involved in the maturation of the 35S-pre-rRNA and to its cleavage to mature 18S rRNA. This Encephalitozoon cuniculi (strain GB-M1) (Microsporidian parasite) protein is ATP-dependent rRNA helicase RRP3.